Here is a 412-residue protein sequence, read N- to C-terminus: [Pyruvate dehydrogenase (acetyl-transferring)] kinase isozyme 4, mitochondrial (412 aa).

One can recognise a Histidine kinase domain in the interval 138-368 (ILEYKDNCTV…DAIIYLKALS (231 aa)). Residues 254–261 (ELFKNAMR), Asp-293, 312–313 (ST), and 329–334 (GFGYGL) contribute to the ATP site.

Belongs to the PDK/BCKDK protein kinase family. As to quaternary structure, homodimer. Interacts with the pyruvate dehydrogenase complex subunit DLAT, and is part of the multimeric pyruvate dehydrogenase complex that contains multiple copies of pyruvate dehydrogenase (E1), dihydrolipoamide acetyltransferase (DLAT, E2) and lipoamide dehydrogenase (DLD, E3). In terms of tissue distribution, ubiquitous; highest levels of expression in heart and skeletal muscle.

Its subcellular location is the mitochondrion matrix. It carries out the reaction L-seryl-[pyruvate dehydrogenase E1 alpha subunit] + ATP = O-phospho-L-seryl-[pyruvate dehydrogenase E1 alpha subunit] + ADP + H(+). In terms of biological role, kinase that plays a key role in regulation of glucose and fatty acid metabolism and homeostasis via phosphorylation of the pyruvate dehydrogenase subunits PDHA1 and PDHA2. This inhibits pyruvate dehydrogenase activity, and thereby regulates metabolite flux through the tricarboxylic acid cycle, down-regulates aerobic respiration and inhibits the formation of acetyl-coenzyme A from pyruvate. Inhibition of pyruvate dehydrogenase decreases glucose utilization and increases fat metabolism in response to prolonged fasting and starvation. Plays an important role in maintaining normal blood glucose levels under starvation, and is involved in the insulin signaling cascade. Via its regulation of pyruvate dehydrogenase activity, plays an important role in maintaining normal blood pH and in preventing the accumulation of ketone bodies under starvation. In the fed state, mediates cellular responses to glucose levels and to a high-fat diet. Regulates both fatty acid oxidation and de novo fatty acid biosynthesis. Plays a role in the generation of reactive oxygen species. Protects detached epithelial cells against anoikis. Plays a role in cell proliferation via its role in regulating carbohydrate and fatty acid metabolism. This chain is [Pyruvate dehydrogenase (acetyl-transferring)] kinase isozyme 4, mitochondrial (Pdk4), found in Rattus norvegicus (Rat).